The following is a 272-amino-acid chain: uncharacterized protein (272 aa).

Helical transmembrane passes span 20–37, 57–77, 97–119, 155–177, 184–203, and 234–256; these read VYLS…NLLI, HPLT…HFSL, LNVS…IMLM, SIAT…YVIF, LVSL…VTLG, and PYSI…WLVI.

It is found in the cell membrane. This is an uncharacterized protein from Halalkalibacterium halodurans (strain ATCC BAA-125 / DSM 18197 / FERM 7344 / JCM 9153 / C-125) (Bacillus halodurans).